The primary structure comprises 385 residues: Muconate cycloisomerase 1-2 (385 aa).

Residue Lys171 is part of the active site. Residues Glu226 and Asp251 each contribute to the Mn(2+) site.

Belongs to the mandelate racemase/muconate lactonizing enzyme family. As to quaternary structure, homooctamer. Mn(2+) serves as cofactor.

It carries out the reaction (S)-muconolactone = cis,cis-muconate + H(+). The protein operates within aromatic compound metabolism; beta-ketoadipate pathway; 5-oxo-4,5-dihydro-2-furylacetate from catechol: step 2/3. Catalyzes a syn cycloisomerization. In Acinetobacter lwoffii, this protein is Muconate cycloisomerase 1-2 (catB2).